Reading from the N-terminus, the 167-residue chain is Probable host range protein 2 (167 aa).

The protein belongs to the poxviridae C7 protein family.

In terms of biological role, plays a role for multiplication of the virus in different cell types. This is Probable host range protein 2 from Yaba monkey tumor virus (strain VR587) (YMTV).